The following is a 131-amino-acid chain: Large ribosomal subunit protein bL17 (131 aa).

Belongs to the bacterial ribosomal protein bL17 family. In terms of assembly, part of the 50S ribosomal subunit. Contacts protein L32.

The chain is Large ribosomal subunit protein bL17 from Hamiltonella defensa subsp. Acyrthosiphon pisum (strain 5AT).